Reading from the N-terminus, the 68-residue chain is Large ribosomal subunit protein uL29 (68 aa).

This sequence belongs to the universal ribosomal protein uL29 family.

This Streptococcus suis (strain 98HAH33) protein is Large ribosomal subunit protein uL29.